The sequence spans 465 residues: Cysteine--tRNA ligase (465 aa).

Cys30 provides a ligand contact to Zn(2+). Positions 32-42 match the 'HIGH' region motif; it reads MTVYDYCHVGH. The Zn(2+) site is built by Cys214, His239, and Glu243. The 'KMSKS' region motif lies at 271–275; it reads KMSKS. ATP is bound at residue Lys274.

Belongs to the class-I aminoacyl-tRNA synthetase family. In terms of assembly, monomer. The cofactor is Zn(2+).

It localises to the cytoplasm. It carries out the reaction tRNA(Cys) + L-cysteine + ATP = L-cysteinyl-tRNA(Cys) + AMP + diphosphate. In Ralstonia nicotianae (strain ATCC BAA-1114 / GMI1000) (Ralstonia solanacearum), this protein is Cysteine--tRNA ligase.